Here is a 99-residue protein sequence, read N- to C-terminus: uncharacterized protein (99 aa).

The chain crosses the membrane as a helical span at residues 74–90 (FLSLPLGHSYLFLFCFW).

It localises to the membrane. This is an uncharacterized protein from Saccharomyces cerevisiae (strain ATCC 204508 / S288c) (Baker's yeast).